Here is a 65-residue protein sequence, read N- to C-terminus: MNKVYLVAILVLSVLLVANVSPIEGVPTGGCPLSDALCAKYCKSNKYGKTGKCTGTSKGTCKCLV.

The signal sequence occupies residues 1–25; the sequence is MNKVYLVAILVLSVLLVANVSPIEG. Disulfide bonds link cysteine 31-cysteine 53, cysteine 38-cysteine 61, and cysteine 42-cysteine 63.

This sequence belongs to the short scorpion toxin superfamily. Potassium channel inhibitor family. Alpha-KTx 11 subfamily. In terms of tissue distribution, expressed by the venom gland.

Its subcellular location is the secreted. This recombinant toxin inhibits the mammalian voltage-gated potassium channels Kv1.3/KCNA3 in vitro with an IC(50) of 26.40 nM. The polypeptide is Putative potassium channel toxin Ts21 (Tityus serrulatus (Brazilian scorpion)).